A 417-amino-acid polypeptide reads, in one-letter code: Glutamyl-tRNA reductase (417 aa).

Residues Thr49–Arg52, Ser105, Glu110–Gln112, and Gln116 contribute to the substrate site. Catalysis depends on Cys50, which acts as the Nucleophile. Gly185 to Ile190 contacts NADP(+).

Belongs to the glutamyl-tRNA reductase family. Homodimer.

It catalyses the reaction (S)-4-amino-5-oxopentanoate + tRNA(Glu) + NADP(+) = L-glutamyl-tRNA(Glu) + NADPH + H(+). Its pathway is porphyrin-containing compound metabolism; protoporphyrin-IX biosynthesis; 5-aminolevulinate from L-glutamyl-tRNA(Glu): step 1/2. Functionally, catalyzes the NADPH-dependent reduction of glutamyl-tRNA(Glu) to glutamate 1-semialdehyde (GSA). This chain is Glutamyl-tRNA reductase, found in Chromobacterium violaceum (strain ATCC 12472 / DSM 30191 / JCM 1249 / CCUG 213 / NBRC 12614 / NCIMB 9131 / NCTC 9757 / MK).